Consider the following 191-residue polypeptide: Calcium-activated potassium channel subunit beta-1 (191 aa).

Over 1 to 18 (MVKKLVMAQKRGETRALC) the chain is Cytoplasmic. The chain crosses the membrane as a helical span at residues 19 to 39 (LGVTMVVCAVITYYILVTTVL). Topologically, residues 40-157 (PLYQKSVWTQ…FQRLYGPQAL (118 aa)) are extracellular. 2 N-linked (GlcNAc...) asparagine glycosylation sites follow: Asn80 and Asn142. A helical membrane pass occupies residues 158–178 (LFSLFWPTFLLTGGLLIIAMV). Topologically, residues 179–191 (KSNQYLSILAAQK) are cytoplasmic.

This sequence belongs to the KCNMB (TC 8.A.14.1) family. KCNMB1 subfamily. As to quaternary structure, interacts with KCNMA1 tetramer. There are probably 4 molecules of KCMNB1 per KCNMA1 tetramer. In terms of processing, N-glycosylated. In terms of tissue distribution, abundantly expressed in smooth muscle. Low levels of expression in most other tissues. Within the brain, relatively high levels found in hippocampus and corpus callosum.

It is found in the membrane. Regulatory subunit of the calcium activated potassium KCNMA1 (maxiK) channel. Modulates the calcium sensitivity and gating kinetics of KCNMA1, thereby contributing to KCNMA1 channel diversity. Increases the apparent Ca(2+)/voltage sensitivity of the KCNMA1 channel. It also modifies KCNMA1 channel kinetics and alters its pharmacological properties. It slows down the activation and the deactivation kinetics of the channel. Acts as a negative regulator of smooth muscle contraction by enhancing the calcium sensitivity to KCNMA1. Its presence is also a requirement for internal binding of the KCNMA1 channel opener dehydrosoyasaponin I (DHS-1) triterpene glycoside and for external binding of the agonist hormone 17-beta-estradiol (E2). Increases the binding activity of charybdotoxin (CTX) toxin to KCNMA1 peptide blocker by increasing the CTX association rate and decreasing the dissociation rate. The sequence is that of Calcium-activated potassium channel subunit beta-1 (KCNMB1) from Homo sapiens (Human).